We begin with the raw amino-acid sequence, 501 residues long: ATP synthase subunit alpha (501 aa).

An ATP-binding site is contributed by 169–176 (GDRQTGKT).

The protein belongs to the ATPase alpha/beta chains family. In terms of assembly, F-type ATPases have 2 components, CF(1) - the catalytic core - and CF(0) - the membrane proton channel. CF(1) has five subunits: alpha(3), beta(3), gamma(1), delta(1), epsilon(1). CF(0) has three main subunits: a(1), b(2) and c(9-12). The alpha and beta chains form an alternating ring which encloses part of the gamma chain. CF(1) is attached to CF(0) by a central stalk formed by the gamma and epsilon chains, while a peripheral stalk is formed by the delta and b chains.

Its subcellular location is the cell membrane. It carries out the reaction ATP + H2O + 4 H(+)(in) = ADP + phosphate + 5 H(+)(out). Functionally, produces ATP from ADP in the presence of a proton gradient across the membrane. The alpha chain is a regulatory subunit. This chain is ATP synthase subunit alpha, found in Streptococcus equi subsp. equi (strain 4047).